Here is a 159-residue protein sequence, read N- to C-terminus: NADH-quinone oxidoreductase subunit I (159 aa).

4Fe-4S ferredoxin-type domains follow at residues 51–80 and 90–119; these read RRYE…IEAD and TRYD…EGPN. [4Fe-4S] cluster is bound by residues C60, C63, C66, C70, C99, C102, C105, and C109.

It belongs to the complex I 23 kDa subunit family. In terms of assembly, NDH-1 is composed of 14 different subunits. Subunits NuoA, H, J, K, L, M, N constitute the membrane sector of the complex. Requires [4Fe-4S] cluster as cofactor.

The protein resides in the cell inner membrane. The catalysed reaction is a quinone + NADH + 5 H(+)(in) = a quinol + NAD(+) + 4 H(+)(out). NDH-1 shuttles electrons from NADH, via FMN and iron-sulfur (Fe-S) centers, to quinones in the respiratory chain. The immediate electron acceptor for the enzyme in this species is believed to be ubiquinone. Couples the redox reaction to proton translocation (for every two electrons transferred, four hydrogen ions are translocated across the cytoplasmic membrane), and thus conserves the redox energy in a proton gradient. This chain is NADH-quinone oxidoreductase subunit I, found in Rickettsia felis (strain ATCC VR-1525 / URRWXCal2) (Rickettsia azadi).